The primary structure comprises 855 residues: DNA mismatch repair protein MutS (855 aa).

Residue 613-620 (GPNMGGKS) participates in ATP binding. The disordered stretch occupies residues 795–816 (ETTSLPHEVPSQQSGKPASPMQ). Positions 796–816 (TTSLPHEVPSQQSGKPASPMQ) are enriched in polar residues.

The protein belongs to the DNA mismatch repair MutS family.

Functionally, this protein is involved in the repair of mismatches in DNA. It is possible that it carries out the mismatch recognition step. This protein has a weak ATPase activity. This is DNA mismatch repair protein MutS from Pseudomonas paraeruginosa (strain DSM 24068 / PA7) (Pseudomonas aeruginosa (strain PA7)).